We begin with the raw amino-acid sequence, 447 residues long: Selenide, water dikinase 3 (447 aa).

Residue selenocysteine 50 is part of the active site. A non-standard amino acid (selenocysteine) is located at residue selenocysteine 50. Residues lysine 53, 103–105, aspartate 123, aspartate 146, and 197–200 each bind ATP; these read GMD and GGQT. Aspartate 105 serves as a coordination point for Mg(2+). Aspartate 146 serves as a coordination point for Mg(2+). Position 301 (aspartate 301) interacts with Mg(2+).

Belongs to the selenophosphate synthase 1 family. In terms of assembly, homodimer. It depends on Mg(2+) as a cofactor. In terms of tissue distribution, in the embryo, expressed in retina, olfactory vesicles, tectum, pronephros ducts and myotomes at 24 hours post-fertilization and in retina, tectum, liver and intestinal bulb 3 days after fertilization.

It catalyses the reaction hydrogenselenide + ATP + H2O = selenophosphate + AMP + phosphate + 2 H(+). Its function is as follows. Synthesizes selenophosphate from selenide and ATP. This chain is Selenide, water dikinase 3, found in Danio rerio (Zebrafish).